Here is a 429-residue protein sequence, read N- to C-terminus: Phosphomethylpyrimidine synthase (429 aa).

Substrate-binding positions include Asn-66, Met-95, Tyr-124, His-163, Ser-185 to Gly-187, Asp-226 to Arg-229, and Glu-265. His-269 provides a ligand contact to Zn(2+). Substrate is bound at residue Tyr-292. His-333 lines the Zn(2+) pocket. Positions 407, 410, and 414 each coordinate [4Fe-4S] cluster.

The protein belongs to the ThiC family. [4Fe-4S] cluster is required as a cofactor.

The catalysed reaction is 5-amino-1-(5-phospho-beta-D-ribosyl)imidazole + S-adenosyl-L-methionine = 4-amino-2-methyl-5-(phosphooxymethyl)pyrimidine + CO + 5'-deoxyadenosine + formate + L-methionine + 3 H(+). It functions in the pathway cofactor biosynthesis; thiamine diphosphate biosynthesis. In terms of biological role, catalyzes the synthesis of the hydroxymethylpyrimidine phosphate (HMP-P) moiety of thiamine from aminoimidazole ribotide (AIR) in a radical S-adenosyl-L-methionine (SAM)-dependent reaction. This Pyrococcus furiosus (strain ATCC 43587 / DSM 3638 / JCM 8422 / Vc1) protein is Phosphomethylpyrimidine synthase.